The primary structure comprises 69 residues: Sperm protamine P1 (69 aa).

The tract at residues 1-69 (MASYRNSRSR…RKRNNNTENK (69 aa)) is disordered. Basic residues-rich tracts occupy residues 7–25 (SRSR…RSRV) and 34–63 (RSSR…RKRN).

The protein belongs to the protamine P1 family. As to expression, testis.

Its subcellular location is the nucleus. It localises to the chromosome. Protamines substitute for histones in the chromatin of sperm during the haploid phase of spermatogenesis. They compact sperm DNA into a highly condensed, stable and inactive complex. The chain is Sperm protamine P1 (PRM1) from Perameles gunnii (Eastern barred bandicoot).